The primary structure comprises 215 residues: UPF0488 protein C8orf33 homolog (215 aa).

Disordered regions lie at residues 1–72 (MLED…DEQL), 87–111 (LRTQ…RSSK), and 158–199 (CKPV…DTKP). Over residues 29–39 (AKKHKKKKKKK) the composition is skewed to basic residues. The segment covering 40–63 (AGEGKDDQQRETKTTEGETAKQET) has biased composition (basic and acidic residues). Composition is skewed to basic and acidic residues over residues 167 to 178 (ERNTQPKNKTDG) and 188 to 199 (TNEHTKTEDTKP).

Belongs to the UPF0488 family.

This is UPF0488 protein C8orf33 homolog from Danio rerio (Zebrafish).